Here is a 503-residue protein sequence, read N- to C-terminus: Hexose transporter 1 (503 aa).

Topologically, residues 1–26 (MKKSSKEISPSQSLKNGGSDHFFNTS) are cytoplasmic. The chain crosses the membrane as a helical span at residues 27–47 (LMYVLAACLASFIFGYQVSVL). Topologically, residues 48-76 (NTIKNFIVIEFGWCTGNKVECDDSTLKSS) are extracellular. The cysteines at positions 61 and 68 are disulfide-linked. A helical transmembrane segment spans residues 77 to 97 (FLLASVFIGAVVGSGFSDYLV). Residues 98–102 (QHGRR) lie on the Cytoplasmic side of the membrane. Residues 103 to 123 (FSLLVIYNFFILVSILTSITH) form a helical membrane-spanning segment. The Extracellular portion of the chain corresponds to 124–132 (HFHTILFSR). Residues 133 to 153 (LLSGFGVGLITVSVPMYISEM) form a helical membrane-spanning segment. At 154–163 (THKDKKGAYG) the chain is on the cytoplasmic side. A helical membrane pass occupies residues 164–184 (VLHQLFITFGILVAVLLGMAM). Q167 provides a ligand contact to alpha-D-glucose. Q167 provides a ligand contact to beta-D-glucose. The Extracellular segment spans residues 185 to 205 (GEAPDAKSVDALGEFQKIWWR). Residues 206 to 226 (LMFFFPCLISILGIVLLTFFY) traverse the membrane as a helical segment. The Cytoplasmic portion of the chain corresponds to 227-291 (KEETPYYLFE…RAMQIPSYRN (65 aa)). Residues 292–312 (VILLGCILSGLQQFTGINVLV) traverse the membrane as a helical segment. Alpha-D-glucose contacts are provided by Q303, Q304, and N309. Q303 contacts beta-D-glucose. Position 309 (N309) interacts with beta-D-glucose. The Extracellular portion of the chain corresponds to 313-329 (SNSNELYKEFLSNKLIT). The chain crosses the membrane as a helical span at residues 330 to 350 (TLSVIMTVVNFLMTFPAIYIV). N339 serves as a coordination point for beta-D-glucose. The Cytoplasmic portion of the chain corresponds to 351–356 (EKLGRK). The chain crosses the membrane as a helical span at residues 357–377 (TLLLCGCAGVTLAAFLPTAIA). The Extracellular portion of the chain corresponds to 378 to 391 (NQIDRSSDLVRNLS). Residues 392-412 (IAATFVMIISFAVSYGPVLWI) traverse the membrane as a helical segment. Residue W411 coordinates alpha-D-glucose. The Cytoplasmic segment spans residues 413–428 (YLHEMFPSEIKDSAAS). The chain crosses the membrane as a helical span at residues 429-449 (LASLVNWVCAIIVVFPSDIII). At 450 to 454 (KKSPT) the chain is on the extracellular side. The chain crosses the membrane as a helical span at residues 455–475 (ILFFIFSGMSILSFLFIFFFI). Residues 476–503 (KETKGGEIGTSPYITMEERQKHMGKSAV) are Cytoplasmic-facing.

This sequence belongs to the major facilitator superfamily. Sugar transporter (TC 2.A.1.1) family. As to quaternary structure, homodimer.

It is found in the cell membrane. It carries out the reaction D-glucose(out) = D-glucose(in). The enzyme catalyses D-fructose(out) = D-fructose(in). The catalysed reaction is D-galactose(in) = D-galactose(out). It catalyses the reaction D-mannose(out) = D-mannose(in). It carries out the reaction D-glucosamine(out) = D-glucosamine(in). The enzyme catalyses D-xylose(out) = D-xylose(in). With respect to regulation, inhibited by compound 3361 (3-O-((undec-10-en)-1-yl)-D-glucose). In terms of biological role, sodium-independent facilitative hexose transporter. Can transport D-glucose and D-fructose. Can transport D-mannose, D-galactose, D-xylose and D-glucosamine. This chain is Hexose transporter 1, found in Plasmodium vivax.